The sequence spans 275 residues: Large ribosomal subunit protein uL2 (275 aa).

The segment at 223-275 (VAMNPVDHPHGGGEGRTSGGRHPVSPWGQPTKGYKTRSNKRTDKYIVRRRNKK) is disordered.

This sequence belongs to the universal ribosomal protein uL2 family. In terms of assembly, part of the 50S ribosomal subunit. Forms a bridge to the 30S subunit in the 70S ribosome.

One of the primary rRNA binding proteins. Required for association of the 30S and 50S subunits to form the 70S ribosome, for tRNA binding and peptide bond formation. It has been suggested to have peptidyltransferase activity; this is somewhat controversial. Makes several contacts with the 16S rRNA in the 70S ribosome. In Shewanella pealeana (strain ATCC 700345 / ANG-SQ1), this protein is Large ribosomal subunit protein uL2.